A 398-amino-acid chain; its full sequence is Lysophosphatidylserine lipase ABHD12 (398 aa).

At 1-74 the chain is on the cytoplasmic side; it reads MRKRTEPVAL…RKGLWLRLRK (74 aa). Residues 75-95 traverse the membrane as a helical segment; that stretch reads ILFCVLGLYIAIPFLIKLCPG. The Extracellular segment spans residues 96–398; sequence IQAKLIFLNF…LGKSEPEHQH (303 aa). Residue N123 is glycosylated (N-linked (GlcNAc...) asparagine). S246 functions as the Nucleophile in the catalytic mechanism. Residues D333 and H372 each act as charge relay system in the active site.

This sequence belongs to the serine esterase family.

It is found in the endoplasmic reticulum membrane. It catalyses the reaction 1-(9Z-octadecenoyl)-sn-glycero-3-phospho-L-serine + H2O = sn-glycero-3-phospho-L-serine + (9Z)-octadecenoate + H(+). The catalysed reaction is 1-(9Z-octadecenoyl)-sn-glycero-3-phospho-(1'-sn-glycerol) + H2O = sn-glycero-3-phospho-(1'-sn-glycerol) + (9Z)-octadecenoate + H(+). The enzyme catalyses 1-(9Z-octadecenoyl)-sn-glycero-3-phospho-(1D-myo-inositol) + H2O = sn-glycero-3-phospho-1D-myo-inositol + (9Z)-octadecenoate + H(+). It carries out the reaction 1-(9Z-octadecenoyl)-sn-glycero-3-phosphoethanolamine + H2O = sn-glycero-3-phosphoethanolamine + (9Z)-octadecenoate + H(+). It catalyses the reaction 1-(9Z-octadecenoyl)-sn-glycero-3-phosphocholine + H2O = 1-(9Z-octadecenoyl)-sn-glycerol + phosphocholine + H(+). The catalysed reaction is 2-(9Z-octadecenoyl)-glycerol + H2O = glycerol + (9Z)-octadecenoate + H(+). The enzyme catalyses 1-hexadecanoyl-sn-glycero-3-phospho-L-serine + H2O = sn-glycero-3-phospho-L-serine + hexadecanoate + H(+). It carries out the reaction 2-(5Z,8Z,11Z,14Z-eicosatetraenoyl)-glycerol + H2O = glycerol + (5Z,8Z,11Z,14Z)-eicosatetraenoate + H(+). It catalyses the reaction Hydrolyzes glycerol monoesters of long-chain fatty acids.. The catalysed reaction is 1-decanoylglycerol + H2O = decanoate + glycerol + H(+). The enzyme catalyses 1-dodecanoylglycerol + H2O = dodecanoate + glycerol + H(+). It carries out the reaction 1-tetradecanoylglycerol + H2O = tetradecanoate + glycerol + H(+). It catalyses the reaction 2-hexadecanoylglycerol + H2O = glycerol + hexadecanoate + H(+). The catalysed reaction is 1-(9Z-octadecenoyl)-glycerol + H2O = glycerol + (9Z)-octadecenoate + H(+). The enzyme catalyses 2-(9Z,12Z-octadecadienoyl)-glycerol + H2O = (9Z,12Z)-octadecadienoate + glycerol + H(+). It carries out the reaction 1-(5Z,8Z,11Z,14Z-eicosatetraenoyl)-glycerol + H2O = glycerol + (5Z,8Z,11Z,14Z)-eicosatetraenoate + H(+). It catalyses the reaction 1-(9Z,12Z-octadecadienoyl)-glycerol + H2O = (9Z,12Z)-octadecadienoate + glycerol + H(+). The catalysed reaction is 1-hexadecanoylglycerol + H2O = glycerol + hexadecanoate + H(+). The enzyme catalyses 1-octadecanoylglycerol + H2O = octadecanoate + glycerol + H(+). It carries out the reaction 1-octadecanoyl-2-(9,10-epoxyoctadecanoyl)-sn-glycero-3-phospho-L-serine + H2O = 9,10-epoxyoctadecanoate + 1-octadecanoyl-sn-glycero-3-phosphoserine + H(+). It catalyses the reaction 1-octadecanoyl-2-(10-hydroxyoctadecanoyl)-sn-glycero-3-phospho-L-serine + H2O = 1-octadecanoyl-sn-glycero-3-phosphoserine + 10-hydroxyoctadecanoate + H(+). The catalysed reaction is 1-hexadecanoyl-2-(10-hydroxyoctadecanoyl)-sn-glycero-3-phospho-L-serine + H2O = 10-hydroxyoctadecanoate + 1-hexadecanoyl-sn-glycero-3-phospho-L-serine + H(+). Functionally, lysophosphatidylserine (LPS) lipase that mediates the hydrolysis of lysophosphatidylserine, a class of signaling lipids that regulates immunological and neurological processes. Represents a major lysophosphatidylserine lipase in the brain, thereby playing a key role in the central nervous system. Also able to hydrolyze oxidized phosphatidylserine; oxidized phosphatidylserine is produced in response to severe inflammatory stress and constitutes a proapoptotic 'eat me' signal. Also has monoacylglycerol (MAG) lipase activity: hydrolyzes 2-arachidonoylglycerol (2-AG), thereby acting as a regulator of endocannabinoid signaling pathways. Has a strong preference for very-long-chain lipid substrates; substrate specificity is likely due to improved catalysis and not improved substrate binding. This is Lysophosphatidylserine lipase ABHD12 from Macaca fascicularis (Crab-eating macaque).